The following is a 363-amino-acid chain: MISGGGTGGHIYPALALIERLKQRGLLDAVLYVGTERGLESKIVPDQGIDFKTLEIQGFKRSMNLNGIKTNLKTIELFMSSIKSAKKMIKEFKPDVVIGTGGYVSGSLLYAASRLKVPTIIHEQNSAAGVTNKFLARFVDKVAISFESVSDQFPMHKVVLTGNPRAQQVAGMVPNERLSEFGLKTDSPTVMIFGGSRGAPSINKAFIDAVPLLNERDYQVLFVSGQVHYENVQAALANTTLNSNLAFVPYISNMPEVLPDLKAIVGRAGATSLAEITALGIPSILIPSPYVTNDHQTKNAQSLVKEDAAMLIPEPELTGASLVKALDTLFETPEKQHAMAKAAKKSGIRDASDRIIEVIETII.

Residues 7–9 (TGG), asparagine 125, serine 196, isoleucine 251, and glutamine 296 each bind UDP-N-acetyl-alpha-D-glucosamine.

Belongs to the glycosyltransferase 28 family. MurG subfamily.

The protein resides in the cell membrane. The enzyme catalyses Mur2Ac(oyl-L-Ala-gamma-D-Glu-L-Lys-D-Ala-D-Ala)-di-trans,octa-cis-undecaprenyl diphosphate + UDP-N-acetyl-alpha-D-glucosamine = beta-D-GlcNAc-(1-&gt;4)-Mur2Ac(oyl-L-Ala-gamma-D-Glu-L-Lys-D-Ala-D-Ala)-di-trans,octa-cis-undecaprenyl diphosphate + UDP + H(+). The protein operates within cell wall biogenesis; peptidoglycan biosynthesis. In terms of biological role, cell wall formation. Catalyzes the transfer of a GlcNAc subunit on undecaprenyl-pyrophosphoryl-MurNAc-pentapeptide (lipid intermediate I) to form undecaprenyl-pyrophosphoryl-MurNAc-(pentapeptide)GlcNAc (lipid intermediate II). This Latilactobacillus sakei subsp. sakei (strain 23K) (Lactobacillus sakei subsp. sakei) protein is UDP-N-acetylglucosamine--N-acetylmuramyl-(pentapeptide) pyrophosphoryl-undecaprenol N-acetylglucosamine transferase.